A 119-amino-acid polypeptide reads, in one-letter code: Ribonuclease P protein component (119 aa).

It belongs to the RnpA family. In terms of assembly, consists of a catalytic RNA component (M1 or rnpB) and a protein subunit.

The catalysed reaction is Endonucleolytic cleavage of RNA, removing 5'-extranucleotides from tRNA precursor.. RNaseP catalyzes the removal of the 5'-leader sequence from pre-tRNA to produce the mature 5'-terminus. It can also cleave other RNA substrates such as 4.5S RNA. The protein component plays an auxiliary but essential role in vivo by binding to the 5'-leader sequence and broadening the substrate specificity of the ribozyme. This chain is Ribonuclease P protein component, found in Salmonella schwarzengrund (strain CVM19633).